Reading from the N-terminus, the 818-residue chain is Protein Cep78 homolog (818 aa).

3 disordered regions span residues 513–589, 691–748, and 768–798; these read LDVE…HEFA, RQAN…TEAT, and KQSE…DQNV. Residues 514 to 539 show a composition bias toward acidic residues; it reads DVEEEEEEEEEEQQAEESQSESEPQN. Residues 561-589 are compositionally biased toward basic and acidic residues; it reads VRSEIKYVENNPKEAAKKNRESKSDHEFA. Residues 782 to 792 are compositionally biased toward gly residues; that stretch reads GDAGGGGGSGD.

It belongs to the CEP78 family.

It localises to the cytoplasm. The protein localises to the cytoskeleton. It is found in the microtubule organizing center. Its subcellular location is the centrosome. The protein resides in the centriole. It localises to the cilium basal body. In terms of biological role, may play a role in cilium biogenesis. The protein is Protein Cep78 homolog of Drosophila melanogaster (Fruit fly).